The sequence spans 164 residues: UPF0304 protein HSM_1818 (164 aa).

The protein belongs to the UPF0304 family.

The chain is UPF0304 protein HSM_1818 from Histophilus somni (strain 2336) (Haemophilus somnus).